Reading from the N-terminus, the 156-residue chain is Small ribosomal subunit protein uS7 (156 aa).

This sequence belongs to the universal ribosomal protein uS7 family. Part of the 30S ribosomal subunit. Contacts proteins S9 and S11.

Its function is as follows. One of the primary rRNA binding proteins, it binds directly to 16S rRNA where it nucleates assembly of the head domain of the 30S subunit. Is located at the subunit interface close to the decoding center, probably blocks exit of the E-site tRNA. In Polynucleobacter asymbioticus (strain DSM 18221 / CIP 109841 / QLW-P1DMWA-1) (Polynucleobacter necessarius subsp. asymbioticus), this protein is Small ribosomal subunit protein uS7.